The chain runs to 72 residues: Translation initiation factor IF-1 (72 aa).

Residues M1–K72 form the S1-like domain.

Belongs to the IF-1 family. In terms of assembly, component of the 30S ribosomal translation pre-initiation complex which assembles on the 30S ribosome in the order IF-2 and IF-3, IF-1 and N-formylmethionyl-tRNA(fMet); mRNA recruitment can occur at any time during PIC assembly.

Its subcellular location is the cytoplasm. Its function is as follows. One of the essential components for the initiation of protein synthesis. Stabilizes the binding of IF-2 and IF-3 on the 30S subunit to which N-formylmethionyl-tRNA(fMet) subsequently binds. Helps modulate mRNA selection, yielding the 30S pre-initiation complex (PIC). Upon addition of the 50S ribosomal subunit IF-1, IF-2 and IF-3 are released leaving the mature 70S translation initiation complex. This Geobacter metallireducens (strain ATCC 53774 / DSM 7210 / GS-15) protein is Translation initiation factor IF-1.